The primary structure comprises 926 residues: Isoleucine--tRNA ligase (926 aa).

Positions methionine 1–proline 21 are disordered. A 'HIGH' region motif is present at residues proline 57–histidine 67. Residue glutamate 552 participates in L-isoleucyl-5'-AMP binding. The short motif at lysine 593–serine 597 is the 'KMSKS' region element. Lysine 596 lines the ATP pocket. The Zn(2+) site is built by cysteine 886, cysteine 889, cysteine 906, and cysteine 909.

It belongs to the class-I aminoacyl-tRNA synthetase family. IleS type 1 subfamily. In terms of assembly, monomer. Zn(2+) is required as a cofactor.

It is found in the cytoplasm. The catalysed reaction is tRNA(Ile) + L-isoleucine + ATP = L-isoleucyl-tRNA(Ile) + AMP + diphosphate. Catalyzes the attachment of isoleucine to tRNA(Ile). As IleRS can inadvertently accommodate and process structurally similar amino acids such as valine, to avoid such errors it has two additional distinct tRNA(Ile)-dependent editing activities. One activity is designated as 'pretransfer' editing and involves the hydrolysis of activated Val-AMP. The other activity is designated 'posttransfer' editing and involves deacylation of mischarged Val-tRNA(Ile). The protein is Isoleucine--tRNA ligase of Enterococcus faecalis (strain ATCC 700802 / V583).